Reading from the N-terminus, the 87-residue chain is MERKLALLLFLGMVTLASCGLREKHVQKLVALIPNDQLRSILKAVVHKVAKTQFGCPAYEGYCNNHCQDIERKDGECHGFKCKCAKD.

A signal peptide spans 1–19; sequence MERKLALLLFLGMVTLASC. Residues 53–87 form the BetaSPN-type CS-alpha/beta domain; the sequence is QFGCPAYEGYCNNHCQDIERKDGECHGFKCKCAKD. 3 disulfide bridges follow: Cys56–Cys77, Cys63–Cys82, and Cys67–Cys84.

This sequence belongs to the long chain scorpion toxin family. Class 1 subfamily. In terms of tissue distribution, expressed by the venom gland.

The protein localises to the secreted. Its function is as follows. May have antibacterial activity. In terms of biological role, inhibits voltage-gated potassium channel. Functionally, does not induce hemolytic activity, lactate dehydrogenase (LDH) release from mast cells, mast cell degranulation, and antimicrobial effects. In vivo, injection into mice causes moderate edema formation, but induces very weak or no change in nociceptive sensibility. It also reduces mice locomotion, suggesting an increase in anxiety, but causes no alteration in rearing (standing on hind limbs). The chain is Scorpine-like peptide Tco 41.46-2 from Tityus costatus (Brazilian scorpion).